Here is a 70-residue protein sequence, read N- to C-terminus: Cytochrome c oxidase subunit 8B, mitochondrial (70 aa).

Residues 1-24 (MLRLAPTVRLLQAPLRGWAVPKAH) constitute a mitochondrion transit peptide. Residues 25–35 (ITAKPAKTPTS) are Mitochondrial matrix-facing. A helical transmembrane segment spans residues 36 to 59 (PKEQAIGLSVTFLSFLLPAGWVLY). Residues 60-70 (HLDNYKKSSAA) are Mitochondrial intermembrane-facing.

This sequence belongs to the cytochrome c oxidase VIII family. In terms of assembly, component of the cytochrome c oxidase (complex IV, CIV), a multisubunit enzyme composed of 14 subunits. The complex is composed of a catalytic core of 3 subunits MT-CO1, MT-CO2 and MT-CO3, encoded in the mitochondrial DNA, and 11 supernumerary subunits COX4I1 (or COX4I2), COX5A, COX5B, COX6A2 (or COX6A1), COX6B1 (or COX6B2), COX6C, COX7A1 (or COX7A2), COX7B, COX7C, COX8B and NDUFA4, which are encoded in the nuclear genome. The complex exists as a monomer or a dimer and forms supercomplexes (SCs) in the inner mitochondrial membrane with NADH-ubiquinone oxidoreductase (complex I, CI) and ubiquinol-cytochrome c oxidoreductase (cytochrome b-c1 complex, complex III, CIII), resulting in different assemblies (supercomplex SCI(1)III(2)IV(1) and megacomplex MCI(2)III(2)IV(2)).

The protein resides in the mitochondrion inner membrane. Its pathway is energy metabolism; oxidative phosphorylation. Component of the cytochrome c oxidase, the last enzyme in the mitochondrial electron transport chain which drives oxidative phosphorylation. The respiratory chain contains 3 multisubunit complexes succinate dehydrogenase (complex II, CII), ubiquinol-cytochrome c oxidoreductase (cytochrome b-c1 complex, complex III, CIII) and cytochrome c oxidase (complex IV, CIV), that cooperate to transfer electrons derived from NADH and succinate to molecular oxygen, creating an electrochemical gradient over the inner membrane that drives transmembrane transport and the ATP synthase. Cytochrome c oxidase is the component of the respiratory chain that catalyzes the reduction of oxygen to water. Electrons originating from reduced cytochrome c in the intermembrane space (IMS) are transferred via the dinuclear copper A center (CU(A)) of subunit 2 and heme A of subunit 1 to the active site in subunit 1, a binuclear center (BNC) formed by heme A3 and copper B (CU(B)). The BNC reduces molecular oxygen to 2 water molecules using 4 electrons from cytochrome c in the IMS and 4 protons from the mitochondrial matrix. In Bos taurus (Bovine), this protein is Cytochrome c oxidase subunit 8B, mitochondrial (COX8B).